Here is a 78-residue protein sequence, read N- to C-terminus: Conotoxin Bu2 (78 aa).

An N-terminal signal peptide occupies residues 1–19 (MKLTCVLIIAVLFLTAITA). A propeptide spanning residues 20–41 (DDSRDKQVYRAVGLIDKMRRIR) is cleaved from the precursor. Intrachain disulfides connect C46–C59, C53–C64, and C58–C73.

The protein belongs to the conotoxin O1 superfamily. In terms of tissue distribution, expressed by the venom duct.

It localises to the secreted. This is Conotoxin Bu2 from Conus bullatus (Bubble cone).